Reading from the N-terminus, the 72-residue chain is Translation initiation factor IF-1 (72 aa).

Residues 1 to 72 (MSKDDSIEFE…TKGRITYRMK (72 aa)) enclose the S1-like domain.

It belongs to the IF-1 family. As to quaternary structure, component of the 30S ribosomal translation pre-initiation complex which assembles on the 30S ribosome in the order IF-2 and IF-3, IF-1 and N-formylmethionyl-tRNA(fMet); mRNA recruitment can occur at any time during PIC assembly.

Its subcellular location is the cytoplasm. Functionally, one of the essential components for the initiation of protein synthesis. Stabilizes the binding of IF-2 and IF-3 on the 30S subunit to which N-formylmethionyl-tRNA(fMet) subsequently binds. Helps modulate mRNA selection, yielding the 30S pre-initiation complex (PIC). Upon addition of the 50S ribosomal subunit IF-1, IF-2 and IF-3 are released leaving the mature 70S translation initiation complex. The protein is Translation initiation factor IF-1 of Xanthomonas euvesicatoria pv. vesicatoria (strain 85-10) (Xanthomonas campestris pv. vesicatoria).